A 462-amino-acid polypeptide reads, in one-letter code: UDP-N-acetylmuramoylalanine--D-glutamate ligase (462 aa).

Residue 117–123 (GTNGKTT) participates in ATP binding.

Belongs to the MurCDEF family.

Its subcellular location is the cytoplasm. It carries out the reaction UDP-N-acetyl-alpha-D-muramoyl-L-alanine + D-glutamate + ATP = UDP-N-acetyl-alpha-D-muramoyl-L-alanyl-D-glutamate + ADP + phosphate + H(+). The protein operates within cell wall biogenesis; peptidoglycan biosynthesis. Cell wall formation. Catalyzes the addition of glutamate to the nucleotide precursor UDP-N-acetylmuramoyl-L-alanine (UMA). The protein is UDP-N-acetylmuramoylalanine--D-glutamate ligase of Synechococcus sp. (strain CC9902).